The following is a 204-amino-acid chain: ATP-dependent Clp protease proteolytic subunit (204 aa).

Ser101 serves as the catalytic Nucleophile. His126 is an active-site residue.

This sequence belongs to the peptidase S14 family. In terms of assembly, component of the chloroplastic Clp protease core complex.

The protein localises to the plastid. It is found in the chloroplast stroma. It carries out the reaction Hydrolysis of proteins to small peptides in the presence of ATP and magnesium. alpha-casein is the usual test substrate. In the absence of ATP, only oligopeptides shorter than five residues are hydrolyzed (such as succinyl-Leu-Tyr-|-NHMec, and Leu-Tyr-Leu-|-Tyr-Trp, in which cleavage of the -Tyr-|-Leu- and -Tyr-|-Trp bonds also occurs).. In terms of biological role, cleaves peptides in various proteins in a process that requires ATP hydrolysis. Has a chymotrypsin-like activity. Plays a major role in the degradation of misfolded proteins. The polypeptide is ATP-dependent Clp protease proteolytic subunit (Anthoceros angustus (Hornwort)).